Reading from the N-terminus, the 290-residue chain is uncharacterized protein (290 aa).

Disordered stretches follow at residues 17-91 and 220-259; these read QTIS…EKNS and DKAS…QMPN. Positions 40–50 are enriched in polar residues; the sequence is NITTHLSTGNL. The span at 66 to 83 shows a compositional bias: basic residues; the sequence is STKKGKRVSKPGTKKKEK. Over residues 233 to 249 the composition is skewed to basic and acidic residues; sequence EGEKDGNAEQGKQKEVQ.

This is an uncharacterized protein from Saccharomyces cerevisiae (strain ATCC 204508 / S288c) (Baker's yeast).